Here is a 354-residue protein sequence, read N- to C-terminus: uncharacterized protein (354 aa).

This is an uncharacterized protein from Rickettsia prowazekii (strain Madrid E).